We begin with the raw amino-acid sequence, 702 residues long: Polyribonucleotide nucleotidyltransferase (702 aa).

Residues Asp485 and Asp491 each contribute to the Mg(2+) site. In terms of domain architecture, KH spans 552–612 (PRTEIICIDP…EGVKKAISII (61 aa)). One can recognise an S1 motif domain in the interval 622–690 (GEIYLGKVTK…NQGRINLSRK (69 aa)).

It belongs to the polyribonucleotide nucleotidyltransferase family. It depends on Mg(2+) as a cofactor.

The protein localises to the cytoplasm. It catalyses the reaction RNA(n+1) + phosphate = RNA(n) + a ribonucleoside 5'-diphosphate. In terms of biological role, involved in mRNA degradation. Catalyzes the phosphorolysis of single-stranded polyribonucleotides processively in the 3'- to 5'-direction. This Clostridium botulinum (strain Loch Maree / Type A3) protein is Polyribonucleotide nucleotidyltransferase.